The sequence spans 310 residues: MKTLFEEIKASIKNNYNQDRSFCRPVLPWGGVFTIKAGRKAVSCTPLYVEIRLKNTCTIDGFLMLLYVILNENENFPRELSLHFGREFVDCFLYLMDTYSFTTVKLLWIWDKMEKQQYKSEVHKASLIIDLFGNEHDNFTKNLENLMSTIQESYCSNWRCPTRVQEDQQRTININPPQEIPHGNLIRLAVNELFCSKIELCEEHGCGGLREFSQRIFCHGAPPFVVLNMQHWKSEDLAYVPYYLDLSDHKYLLEGATLFNKEEHHYSAAFQIGGHWMHYDGLRNVNLILLNKPPEFLLLSSLVYIRATEK.

In terms of assembly, interacts with DRD1.

Its function is as follows. Could be a regulator of the dopamine receptor signaling pathway. The polypeptide is Dopamine receptor-interacting protein 1 (Homo sapiens (Human)).